The primary structure comprises 118 residues: UPF0102 protein STH1475 (118 aa).

It belongs to the UPF0102 family.

In Symbiobacterium thermophilum (strain DSM 24528 / JCM 14929 / IAM 14863 / T), this protein is UPF0102 protein STH1475.